We begin with the raw amino-acid sequence, 873 residues long: Alanine--tRNA ligase (873 aa).

Zn(2+) is bound by residues His557, His561, Cys659, and His663.

This sequence belongs to the class-II aminoacyl-tRNA synthetase family. Zn(2+) is required as a cofactor.

The protein localises to the cytoplasm. It catalyses the reaction tRNA(Ala) + L-alanine + ATP = L-alanyl-tRNA(Ala) + AMP + diphosphate. Its function is as follows. Catalyzes the attachment of alanine to tRNA(Ala) in a two-step reaction: alanine is first activated by ATP to form Ala-AMP and then transferred to the acceptor end of tRNA(Ala). Also edits incorrectly charged Ser-tRNA(Ala) and Gly-tRNA(Ala) via its editing domain. The polypeptide is Alanine--tRNA ligase (Nitrosococcus oceani (strain ATCC 19707 / BCRC 17464 / JCM 30415 / NCIMB 11848 / C-107)).